The following is a 173-amino-acid chain: MIDCDGYRPNVGIILSNQERRLFWAKRIGQQAWQFPQGGIRRDESPLDAMYRELAEETGLGPEHVEVIGKTRDWLRYRLPKHLIRRHSNPVCIGQKQIWFMLRLVGDETCVRLDSVQPAEFDSWRWVDYWRPMREVVFFKRHVYRRALRELAPLLFPEGMPGQQRQPRTRSGA.

The region spanning 6 to 149 is the Nudix hydrolase domain; it reads GYRPNVGIIL…KRHVYRRALR (144 aa). Positions 38–59 match the Nudix box motif; it reads GGIRRDESPLDAMYRELAEETG.

Belongs to the Nudix hydrolase family. RppH subfamily. The cofactor is a divalent metal cation.

Functionally, accelerates the degradation of transcripts by removing pyrophosphate from the 5'-end of triphosphorylated RNA, leading to a more labile monophosphorylated state that can stimulate subsequent ribonuclease cleavage. The sequence is that of RNA pyrophosphohydrolase from Thioalkalivibrio sulfidiphilus (strain HL-EbGR7).